We begin with the raw amino-acid sequence, 194 residues long: Phosphoheptose isomerase (194 aa).

One can recognise an SIS domain in the interval 37 to 194 (ISNSFKQGGK…LIEFEMAKQA (158 aa)). A substrate-binding site is contributed by 52-54 (NGG). Zn(2+) contacts are provided by His-61 and Glu-65. Residues Glu-65, 93–94 (ND), 119–121 (STS), Ser-124, and Gln-172 each bind substrate. Residues Gln-172 and His-180 each contribute to the Zn(2+) site.

The protein belongs to the SIS family. GmhA subfamily. Homotetramer. Zn(2+) is required as a cofactor.

The protein localises to the cytoplasm. The catalysed reaction is 2 D-sedoheptulose 7-phosphate = D-glycero-alpha-D-manno-heptose 7-phosphate + D-glycero-beta-D-manno-heptose 7-phosphate. It participates in carbohydrate biosynthesis; D-glycero-D-manno-heptose 7-phosphate biosynthesis; D-glycero-alpha-D-manno-heptose 7-phosphate and D-glycero-beta-D-manno-heptose 7-phosphate from sedoheptulose 7-phosphate: step 1/1. Its pathway is bacterial outer membrane biogenesis; LOS core biosynthesis. In terms of biological role, catalyzes the isomerization of sedoheptulose 7-phosphate in D-glycero-D-manno-heptose 7-phosphate. The chain is Phosphoheptose isomerase from Haemophilus influenzae (strain ATCC 51907 / DSM 11121 / KW20 / Rd).